Consider the following 69-residue polypeptide: ATP synthase F(0) complex subunit e, mitochondrial (69 aa).

Lysine 34 bears the N6-acetyllysine mark. Serine 66 carries the phosphoserine modification.

Belongs to the ATPase e subunit family. In terms of assembly, component of the ATP synthase complex composed at least of ATP5F1A/subunit alpha, ATP5F1B/subunit beta, ATP5MC1/subunit c (homooctomer), MT-ATP6/subunit a, MT-ATP8/subunit 8, ATP5ME/subunit e, ATP5MF/subunit f, ATP5MG/subunit g, ATP5MK/subunit k, ATP5MJ/subunit j, ATP5F1C/subunit gamma, ATP5F1D/subunit delta, ATP5F1E/subunit epsilon, ATP5PF/subunit F6, ATP5PB/subunit b, ATP5PD/subunit d, ATP5PO/subunit OSCP. ATP synthase complex consists of a soluble F(1) head domain (subunits alpha(3) and beta(3)) - the catalytic core - and a membrane F(0) domain - the membrane proton channel (subunits c, a, 8, e, f, g, k and j). These two domains are linked by a central stalk (subunits gamma, delta, and epsilon) rotating inside the F1 region and a stationary peripheral stalk (subunits F6, b, d, and OSCP).

It is found in the mitochondrion. The protein resides in the mitochondrion inner membrane. Its function is as follows. Subunit e, of the mitochondrial membrane ATP synthase complex (F(1)F(0) ATP synthase or Complex V) that produces ATP from ADP in the presence of a proton gradient across the membrane which is generated by electron transport complexes of the respiratory chain. ATP synthase complex consist of a soluble F(1) head domain - the catalytic core - and a membrane F(1) domain - the membrane proton channel. These two domains are linked by a central stalk rotating inside the F(1) region and a stationary peripheral stalk. During catalysis, ATP synthesis in the catalytic domain of F(1) is coupled via a rotary mechanism of the central stalk subunits to proton translocation. In vivo, can only synthesize ATP although its ATP hydrolase activity can be activated artificially in vitro. Part of the complex F(0) domain. In Homo sapiens (Human), this protein is ATP synthase F(0) complex subunit e, mitochondrial.